The primary structure comprises 299 residues: Small ribosomal subunit protein uS2 (299 aa).

The tract at residues 210–299 is disordered; the sequence is AEKEEQTQVV…GAATDNSWAS (90 aa). Positions 275–285 are enriched in polar residues; sequence WASTGTATVGP.

Belongs to the universal ribosomal protein uS2 family. In terms of assembly, component of the small ribosomal subunit. Mature ribosomes consist of a small (40S) and a large (60S) subunit. The 40S subunit contains about 33 different proteins and 1 molecule of RNA (18S). The 60S subunit contains about 49 different proteins and 3 molecules of RNA (28S, 5.8S and 5S). Interacts with ribosomal protein S21.

It is found in the cytoplasm. In terms of biological role, required for the assembly and/or stability of the 40S ribosomal subunit. Required for the processing of the 20S rRNA-precursor to mature 18S rRNA in a late step of the maturation of 40S ribosomal subunits. The chain is Small ribosomal subunit protein uS2 from Ornithodoros parkeri (Soft tick).